The sequence spans 101 residues: Large ribosomal subunit protein uL23 (101 aa).

Belongs to the universal ribosomal protein uL23 family. As to quaternary structure, part of the 50S ribosomal subunit. Contacts protein L29, and trigger factor when it is bound to the ribosome.

Its function is as follows. One of the early assembly proteins it binds 23S rRNA. One of the proteins that surrounds the polypeptide exit tunnel on the outside of the ribosome. Forms the main docking site for trigger factor binding to the ribosome. This Mannheimia succiniciproducens (strain KCTC 0769BP / MBEL55E) protein is Large ribosomal subunit protein uL23.